The chain runs to 83 residues: Cytotoxin homolog 5 (83 aa).

The N-terminal stretch at 1 to 21 (MKTLLLTMVVVTIVCLDLGYT) is a signal peptide. 4 disulfide bridges follow: Cys-24/Cys-43, Cys-36/Cys-61, Cys-65/Cys-76, and Cys-77/Cys-82.

The protein belongs to the three-finger toxin family. Short-chain subfamily. Orphan group XV sub-subfamily. As to expression, expressed by the venom gland.

Its subcellular location is the secreted. The protein resides in the target cell membrane. Has low cytotoxic activity. This Naja atra (Chinese cobra) protein is Cytotoxin homolog 5.